The primary structure comprises 167 residues: MVPPEEIASASNPDIEGENILHFLCREGDITDLMAFKNVISDANRHLALQFNRHGKQCVHIVSNPGIADPQEKLKLLMEWGADINGQERVFGNTPLHIAAYTQNHKLATWLCNQPGINMGIYNYLFKTPYYVACERHDLKIMNILRAKGTRCGVYRCRDAWLFTQKY.

ANK repeat units lie at residues 54–86 (HGKQ…DING), 91–121 (FGNT…NMGI), and 125–154 (LFKT…RCGV).

The protein belongs to the polydnaviridae I-Kappa-B-like protein family.

Functionally, suppresses the host immune response through NF-kappa-B inactivation. Possesses ankyrin repeat domains required for NF-kappa-B binding but lacks the regulatory regions required for dissociation from NF-kappa-B and degradation. Therefore, prevents host NF-kappa-B release and subsequent activation. The protein is I-Kappa-B like protein F2 (F3) of Microplitis demolitor bracovirus (isolate Webb) (MdBV).